The chain runs to 31 residues: AILEADDDVELLEGYLKDWEAFVSSAAAFEK.

The protein resides in the plastid. It is found in the chloroplast thylakoid. The polypeptide is Unknown protein from spot 104 of 2D-PAGE of thylakoid (Pisum sativum (Garden pea)).